The sequence spans 251 residues: uncharacterized protein (251 aa).

The region spanning 3-58 is the HTH deoR-type domain; it reads TPERHQLIIDQIEKHDVVKIQELINLTNASESTIRRDLSTLEERGFLKRVHGGAAK. Residues 20–39 constitute a DNA-binding region (H-T-H motif); sequence VKIQELINLTNASESTIRRD.

This is an uncharacterized protein from Bacillus subtilis (strain 168).